Consider the following 329-residue polypeptide: D-alanine--D-alanine ligase (329 aa).

Positions 120–326 (KLWLSAIGIP…FADYLEQILR (207 aa)) constitute an ATP-grasp domain. 150–205 (ALAKWGKVFIKAASQGSSVGCYSASNEADLVKGIADAFGYSEQVLIEKAVKPRELE) lines the ATP pocket. Mg(2+) contacts are provided by Asp280, Glu293, and Asn295.

It belongs to the D-alanine--D-alanine ligase family. Requires Mg(2+) as cofactor. Mn(2+) is required as a cofactor.

It localises to the cytoplasm. It catalyses the reaction 2 D-alanine + ATP = D-alanyl-D-alanine + ADP + phosphate + H(+). Its pathway is cell wall biogenesis; peptidoglycan biosynthesis. In terms of biological role, cell wall formation. The chain is D-alanine--D-alanine ligase from Aeromonas hydrophila subsp. hydrophila (strain ATCC 7966 / DSM 30187 / BCRC 13018 / CCUG 14551 / JCM 1027 / KCTC 2358 / NCIMB 9240 / NCTC 8049).